Consider the following 125-residue polypeptide: Small ribosomal subunit protein uS12 (125 aa).

Asp89 bears the 3-methylthioaspartic acid mark.

It belongs to the universal ribosomal protein uS12 family. Part of the 30S ribosomal subunit. Contacts proteins S8 and S17. May interact with IF1 in the 30S initiation complex.

With S4 and S5 plays an important role in translational accuracy. Its function is as follows. Interacts with and stabilizes bases of the 16S rRNA that are involved in tRNA selection in the A site and with the mRNA backbone. Located at the interface of the 30S and 50S subunits, it traverses the body of the 30S subunit contacting proteins on the other side and probably holding the rRNA structure together. The combined cluster of proteins S8, S12 and S17 appears to hold together the shoulder and platform of the 30S subunit. The chain is Small ribosomal subunit protein uS12 from Cupriavidus metallidurans (strain ATCC 43123 / DSM 2839 / NBRC 102507 / CH34) (Ralstonia metallidurans).